Reading from the N-terminus, the 44-residue chain is Defensin heliomicin (44 aa).

Cystine bridges form between C7/C32, C18/C40, and C22/C42.

It is found in the secreted. Functionally, this peptide has potent anti-fungal activity. Has no activity against Gram-negative and Gram-positive bacteria. The chain is Defensin heliomicin from Heliothis virescens (Tobacco budworm moth).